A 256-amino-acid polypeptide reads, in one-letter code: Photosystem I chlorophyll a/b-binding protein 5, chloroplastic (256 aa).

The N-terminal 32 residues, 1-32, are a transit peptide targeting the chloroplast; it reads MAVVLRGGITGGFLHHRRDASSVITRRISSVK. A33 bears the N-acetylalanine mark. W49 provides a ligand contact to chlorophyll b. Chlorophyll a-binding residues include F69 and E88. R93 is a binding site for chlorophyll b. The next 2 helical transmembrane spans lie at 94 to 113 and 129 to 146; these read FAML…TTGI and FAST…MGFA. Positions 147 and 150 each coordinate chlorophyll b. K205, E206, N209, R211, Q223, and H238 together coordinate chlorophyll a. The helical transmembrane segment at 212 to 232 threads the bilayer; it reads LAMMAMLGFFVQASVTHTGPI.

Belongs to the light-harvesting chlorophyll a/b-binding (LHC) protein family. The LHC complex consists of chlorophyll a-b binding proteins. Homodimer. Heterodimer with LHCA2 and, possibly, LHCA3. Can substitute to LHCA4 to form a complex with LHCA1. Binds pigments. Element of the NAD(P)H dehydrogenase-photosystem I supercomplex (NDH-PSI). Requires Binds at least 14 chlorophylls (8 Chl-a and 6 Chl-b) and carotenoids such as lutein and neoxanthin. as cofactor. Photoregulated by reversible phosphorylation of its threonine residues.

Its subcellular location is the plastid. It localises to the chloroplast thylakoid membrane. Functionally, the light-harvesting complex (LHC) functions as a light receptor, it captures and delivers excitation energy to photosystems with which it is closely associated. Seems involved in the function of the photosystem I in low light conditions, when other LHCA proteins are less abundant. Required, together with LHCA6, for the formation of a full-size NAD(P)H dehydrogenase-photosystem I supercomplex (NDH-PSI) that triggers cyclic and chlororespiratory electron transport in chloroplast thylakoids, especially under stress conditions (e.g. increased light intensity). The protein is Photosystem I chlorophyll a/b-binding protein 5, chloroplastic of Arabidopsis thaliana (Mouse-ear cress).